The following is a 276-amino-acid chain: ADP-dependent (S)-NAD(P)H-hydrate dehydratase (276 aa).

In terms of domain architecture, YjeF C-terminal spans 7–274; sequence METLNSINIP…NEIPYAMKQL (268 aa). Positions 42, 105, and 154 each coordinate (6S)-NADPHX. Glycine 216 provides a ligand contact to AMP. Aspartate 217 provides a ligand contact to (6S)-NADPHX.

It belongs to the NnrD/CARKD family. Homotetramer. Mg(2+) serves as cofactor.

The catalysed reaction is (6S)-NADHX + ADP = AMP + phosphate + NADH + H(+). It carries out the reaction (6S)-NADPHX + ADP = AMP + phosphate + NADPH + H(+). Functionally, catalyzes the dehydration of the S-form of NAD(P)HX at the expense of ADP, which is converted to AMP. Together with NAD(P)HX epimerase, which catalyzes the epimerization of the S- and R-forms, the enzyme allows the repair of both epimers of NAD(P)HX, a damaged form of NAD(P)H that is a result of enzymatic or heat-dependent hydration. The protein is ADP-dependent (S)-NAD(P)H-hydrate dehydratase of Staphylococcus aureus (strain NCTC 8325 / PS 47).